Consider the following 572-residue polypeptide: Asparagine synthetase [glutamine-hydrolyzing] 1 (572 aa).

Cys-2 acts as the For GATase activity in catalysis. Residues 2 to 186 (CGIFAAFRHE…PGHVYDSKTD (185 aa)) form the Glutamine amidotransferase type-2 domain. Residues 49–53 (RLAIV), 74–76 (NGE), and Asp-97 contribute to the L-glutamine site. Residues 194-546 (PDWLDEKRIP…QKTVADTVMR (353 aa)) form the Asparagine synthetase domain. An ATP-binding site is contributed by Leu-233. Ser-265 carries the post-translational modification Phosphoserine. ATP contacts are provided by residues Ile-292 and 366–367 (SG). Ser-509 is modified (phosphoserine).

It carries out the reaction L-aspartate + L-glutamine + ATP + H2O = L-asparagine + L-glutamate + AMP + diphosphate + H(+). It functions in the pathway amino-acid biosynthesis; L-asparagine biosynthesis; L-asparagine from L-aspartate (L-Gln route): step 1/1. In Saccharomyces cerevisiae (strain ATCC 204508 / S288c) (Baker's yeast), this protein is Asparagine synthetase [glutamine-hydrolyzing] 1 (ASN1).